We begin with the raw amino-acid sequence, 133 residues long: Ribosome-binding factor A (133 aa).

It belongs to the RbfA family. Monomer. Binds 30S ribosomal subunits, but not 50S ribosomal subunits or 70S ribosomes.

It localises to the cytoplasm. Functionally, one of several proteins that assist in the late maturation steps of the functional core of the 30S ribosomal subunit. Associates with free 30S ribosomal subunits (but not with 30S subunits that are part of 70S ribosomes or polysomes). Required for efficient processing of 16S rRNA. May interact with the 5'-terminal helix region of 16S rRNA. The sequence is that of Ribosome-binding factor A from Pseudomonas fluorescens (strain ATCC BAA-477 / NRRL B-23932 / Pf-5).